We begin with the raw amino-acid sequence, 71 residues long: Delta-actitoxin-Avd2b 4 (71 aa).

Residues 1–20 (MMNRLLVFLMLGAFMLVVSA) form the signal peptide. Residues 21–41 (NDAYGDEPAFKDLNQGDESLG) constitute a propeptide that is removed on maturation. Disulfide bonds link Cys-46/Cys-61, Cys-47/Cys-55, and Cys-49/Cys-66.

This sequence belongs to the sea anemone short toxin (type III) family.

The protein resides in the secreted. The protein localises to the nematocyst. Voltage-gated sodium channel (Nav) inhibitor. 1 uM completely inhibits insect voltage-gated sodium channel inactivation (DmNav1 from D.melanogaster). This chain is Delta-actitoxin-Avd2b 4, found in Anemonia viridis (Snakelocks anemone).